The sequence spans 348 residues: Sex-lethal homolog (348 aa).

2 consecutive RRM domains span residues 110–188 and 196–276; these read TNLI…YARP and TNLY…LAEE. The segment covering 296-310 has biased composition (gly residues); it reads GGGGGGGGGGGGGMG. Residues 296 to 317 form a disordered region; that stretch reads GGGGGGGGGGGGGMGGPPPPPM.

Its subcellular location is the nucleus. Its function is as follows. Unknown; apparently not involved in somatic sex determination. The protein is Sex-lethal homolog (SXL) of Ceratitis capitata (Mediterranean fruit fly).